We begin with the raw amino-acid sequence, 1020 residues long: MARTASGATRPSDLISWSRNGFIAYACPVQHSKDNLLLTYLENVNGNSWKLAEPQSISVKLENNFLSELALVEWSYLSTDLAISDVYGNFYILLAGIGLLEPGSEKSTVNSDSSGAASTAAASQNSPSYELTSYNHMEMIYRDIINQDPALPVNPGAAIVSFSWLNIEKVQIINKPAALVTLENQNSSNSPFVYTYGVNQFQPHGVTHPISTKQACVALRQNGQFTLYFQGEHKVEYHKTSVALSDDIVIITKASIGFTNDKQIVVTAYDSVTRNISTYSVTVDWGFLVESAKRQKVDPHYHTPKEEHKTPKLNVTRISASIPVPTFLAAAEEEGMDMDKMDVDADSEDGNQPSYQIGSLASIDIISAGAEKDSSLDILISYTFEDGSGIASSTIYRYSLSEESELISSAFGELGVRKNVTAPANSPTVQTVTLQDKLIRSGTIQSITTALSDYFILLYYLDGHVDVVDRNSMKIVNNSDDTNLPPKTISSIFDVGFNFPKIDNSSNLIMAVSPNLTSVAYADFKGGSTRLNLKVFEKEKYLGISPKELFATSVGFAFRHAYACYTNTCSDDLVALIQTEIVRLQISLQKTITDKPHNIEMIIKKFVESIVSESHKAINFQLDAFNKESVDKLLSNPPLQKLLSLQLVLGELQDKNSIVSDIAWIVLNLRSTSFGIMFSLSSIYRQISKKKPTEDSLQDSITRGECIMSLVGNVKWLIDLMVYINQELLQLSYSKQDSSNSKLTIKNSIALPIILSKVPRLFLMYALSSIGRTHEILKKLHKDLSEASKLFTPMKESLNRYFTICNNSPLTLSLFENFLRECDALITKEQSIRLAGKEKGYSLKVEQKLVCQGELTEDMEQIGKILIDRHAVNINRDMKVSDLYFYDVDWLDIGVNKRSARTSKGLSETVIYPSSQLKPKMIPRLQYSDKECIDSLRKIIISVDMNQITGKTDTSRNGTTNHKAAIANDKIAKLRKCTRCRSVSLVADPLVFDAPSTIGLWTMVFQRTCICGNAWVNCVS.

It belongs to the Mediator complex subunit 16 family. As to quaternary structure, component of the Mediator complex.

It is found in the nucleus. Functionally, component of the Mediator complex, a coactivator involved in the regulated transcription of nearly all RNA polymerase II-dependent genes. Mediator functions as a bridge to convey information from gene-specific regulatory proteins to the basal RNA polymerase II transcription machinery. Mediator is recruited to promoters by direct interactions with regulatory proteins and serves as a scaffold for the assembly of a functional preinitiation complex with RNA polymerase II and the general transcription factors. This is Mediator of RNA polymerase II transcription subunit 16 (SIN4) from Scheffersomyces stipitis (strain ATCC 58785 / CBS 6054 / NBRC 10063 / NRRL Y-11545) (Yeast).